The chain runs to 749 residues: MGTVVGETELNRLNNGLSSNNGSSADEGLEHWNPLKKIHSADSSRRRSTSSQLNQPSNYHMHSSLHEEVSVGSSIASPSSRIPDKAISQYYETSPPSSTSSLSSNNQLMNSSVILSPGQFLPDDANAYGPKASLPPSEMPSHFHPLWSKSASKDSNAFNDPSAIPNPSPLFSSAYATRINGSLRNDKWNRSSFSEALSSSRFSRPQVGQQQPLSSAFPFQPVKQPTEQPGSLHPFMQESKTSPFATRRPSLNTDHHGRPILLSPLNYQNSSLNPSTPSPFGGSPVMHPPVSNLSPRTPAVPMSSDGHLAPAFDFLNENPIWSKRFSISSIKYSAPSTSNASNIAPDSAPPASSQFSVPFNAAAENINDTPDSVLANSPTPRHLPYTWSRHSTSGPSRSTVLNPSTSRMSNYTGLESHLAQLSFKRRSNSATLPSLGSIRPFPISEHSPNINPLDEAAVEDEVKEEKSRFHLGHRRSSTADNGTLSSNVPLYPAYNSSPVQTRTSLFSSRLSKPSNPIVSSVSQANAPKNALHSMPSPTSLANLPSNLSDTQYKKLYNLYLVEFKAGRADVFYIDDNIKLSLNLNDYVVVDADRGQDLGRLIAQNLSQSEVASHIEKIPSDRNGQLQNLDGAILEGDTSQSLHPKRILRKAQPHEVDQLIQKTQDEAQALLVCQAKVRQRKLPMEVLDGEYQWDRKKLTFYYHAKQRIDFRELVRDLFKVYKTRIWMCAVSGTNMSSPASINASTNQFVL.

4 disordered regions span residues 1-58 (MGTV…QPSN), 124-170 (DANA…PSPL), 200-291 (SRFS…PPVS), and 385-405 (YTWS…NPST). Residues 13–24 (LNNGLSSNNGSS) show a composition bias toward low complexity. Polar residues-rich tracts occupy residues 149–159 (KSASKDSNAFN), 238–252 (ESKT…PSLN), 265–275 (LNYQNSSLNPS), and 388–405 (SRHS…NPST). The PSP1 C-terminal domain maps to 644–729 (KRILRKAQPH…YKTRIWMCAV (86 aa)).

This is an uncharacterized protein from Schizosaccharomyces pombe (strain 972 / ATCC 24843) (Fission yeast).